We begin with the raw amino-acid sequence, 232 residues long: Ribonuclease P protein component 3 (232 aa).

It belongs to the eukaryotic/archaeal RNase P protein component 3 family. As to quaternary structure, consists of a catalytic RNA component and at least 4-5 protein subunits.

It localises to the cytoplasm. It catalyses the reaction Endonucleolytic cleavage of RNA, removing 5'-extranucleotides from tRNA precursor.. Part of ribonuclease P, a protein complex that generates mature tRNA molecules by cleaving their 5'-ends. In Halobacterium salinarum (strain ATCC 29341 / DSM 671 / R1), this protein is Ribonuclease P protein component 3.